The chain runs to 174 residues: Fimbria A protein (174 aa).

Positions 1–22 (MKLNKIMLATVLAFGVSSLANA) are cleaved as a signal peptide. Cys-41 and Cys-80 are joined by a disulfide.

The protein belongs to the fimbrial protein family.

The protein localises to the fimbrium. Functionally, major structural component of mannose-resistant fimbriae of Serratia marcescens. This is Fimbria A protein (smfA) from Serratia marcescens.